The sequence spans 237 residues: Ribosomal RNA small subunit methyltransferase G (237 aa).

S-adenosyl-L-methionine-binding positions include Gly75, Phe80, 127-128, and Arg146; that span reads AE.

This sequence belongs to the methyltransferase superfamily. RNA methyltransferase RsmG family.

The protein localises to the cytoplasm. In terms of biological role, specifically methylates the N7 position of a guanine in 16S rRNA. The chain is Ribosomal RNA small subunit methyltransferase G from Synechococcus sp. (strain RCC307).